Here is a 331-residue protein sequence, read N- to C-terminus: MLEKYYDKDADMSAISSKTIAVIGYGSQGRGQALNLKDSGLKVIIGLRPGKSWDLAKSEGFEVMDVANAAKKADIIQILIPDEQQGAVYKTQIAQGLTKGKTLMFSHGFNIHFGQIVPPADVDVIMVAPKGPGHMVRRTYTEGKGVPALIAIHQDVSGNGKKTALAYAKGIGATRAVVFETSFREETETDLFGEQAVLCGGMTSLIKAGFETLVEAGYAPEMAYLEVLHETKLIVDLIYEGGFTKMRNSISNTAQFGDLTRGPRVIGQESYLAMQEILEEIQTGAFAKEWMLENMVNRPVFNALTRADEEHLIEEVGKEIRATMPQFKDLK.

A KARI N-terminal Rossmann domain is found at 2 to 181 (LEKYYDKDAD…GATRAVVFET (180 aa)). Residues 25–28 (YGSQ), R48, S52, and 82–85 (DEQQ) each bind NADP(+). Residue H107 is part of the active site. G133 contacts NADP(+). The KARI C-terminal knotted domain maps to 182-327 (SFREETETDL…KEIRATMPQF (146 aa)). The Mg(2+) site is built by D190, E194, E226, and E230. S251 lines the substrate pocket.

It belongs to the ketol-acid reductoisomerase family. Mg(2+) serves as cofactor.

The enzyme catalyses (2R)-2,3-dihydroxy-3-methylbutanoate + NADP(+) = (2S)-2-acetolactate + NADPH + H(+). The catalysed reaction is (2R,3R)-2,3-dihydroxy-3-methylpentanoate + NADP(+) = (S)-2-ethyl-2-hydroxy-3-oxobutanoate + NADPH + H(+). Its pathway is amino-acid biosynthesis; L-isoleucine biosynthesis; L-isoleucine from 2-oxobutanoate: step 2/4. It functions in the pathway amino-acid biosynthesis; L-valine biosynthesis; L-valine from pyruvate: step 2/4. Its function is as follows. Involved in the biosynthesis of branched-chain amino acids (BCAA). Catalyzes an alkyl-migration followed by a ketol-acid reduction of (S)-2-acetolactate (S2AL) to yield (R)-2,3-dihydroxy-isovalerate. In the isomerase reaction, S2AL is rearranged via a Mg-dependent methyl migration to produce 3-hydroxy-3-methyl-2-ketobutyrate (HMKB). In the reductase reaction, this 2-ketoacid undergoes a metal-dependent reduction by NADPH to yield (R)-2,3-dihydroxy-isovalerate. The sequence is that of Ketol-acid reductoisomerase (NADP(+)) from Methanospirillum hungatei JF-1 (strain ATCC 27890 / DSM 864 / NBRC 100397 / JF-1).